We begin with the raw amino-acid sequence, 128 residues long: Large ribosomal subunit protein bL12 (128 aa).

Belongs to the bacterial ribosomal protein bL12 family. In terms of assembly, homodimer. Part of the ribosomal stalk of the 50S ribosomal subunit. Forms a multimeric L10(L12)X complex, where L10 forms an elongated spine to which 2 to 4 L12 dimers bind in a sequential fashion. Binds GTP-bound translation factors.

Its function is as follows. Forms part of the ribosomal stalk which helps the ribosome interact with GTP-bound translation factors. Is thus essential for accurate translation. The sequence is that of Large ribosomal subunit protein bL12 from Sulfurihydrogenibium sp. (strain YO3AOP1).